The primary structure comprises 227 residues: Transcriptional regulatory protein CusR (227 aa).

In terms of domain architecture, Response regulatory spans 2-116 (KLLIVEDEKK…ELLARVRTLL (115 aa)). Residue aspartate 51 is modified to 4-aspartylphosphate. Positions 125-223 (ESQFQVADLM…VRGVGYMLEV (99 aa)) form a DNA-binding region, ompR/PhoB-type.

In terms of processing, phosphorylated by CusS.

The protein localises to the cytoplasm. Functionally, member of the two-component regulatory system CusS/CusR involved in response to copper and silver. The chain is Transcriptional regulatory protein CusR (cusR) from Escherichia coli O6:H1 (strain CFT073 / ATCC 700928 / UPEC).